The chain runs to 558 residues: Potassium-transporting ATPase potassium-binding subunit (558 aa).

11 helical membrane passes run 1–21, 59–79, 85–105, 130–150, 179–199, 245–265, 279–299, 374–394, 416–436, 484–504, and 527–547; these read MDTL…VLIH, PAYL…VYGL, FLPY…NTAV, GLAV…IALV, LSLV…FAGF, PTAW…FSLP, TAIV…LTIF, GLYG…LLVG, ILVT…IPAV, ALGV…LALA, and FVGL…FPVL.

This sequence belongs to the KdpA family. As to quaternary structure, the system is composed of three essential subunits: KdpA, KdpB and KdpC.

It is found in the cell membrane. In terms of biological role, part of the high-affinity ATP-driven potassium transport (or Kdp) system, which catalyzes the hydrolysis of ATP coupled with the electrogenic transport of potassium into the cytoplasm. This subunit binds the extracellular potassium ions and delivers the ions to the membrane domain of KdpB through an intramembrane tunnel. The protein is Potassium-transporting ATPase potassium-binding subunit of Clavibacter michiganensis subsp. michiganensis (strain NCPPB 382).